The chain runs to 1251 residues: Immunoglobulin-like and fibronectin type III domain-containing protein 1 (1251 aa).

Positions 29 to 119 (PDFEQKPVTS…GEAACSVRLT (91 aa)) constitute an Ig-like 1 domain. The segment at 61-81 (RWQNSKGDLSDSSKYKISSSP) is disordered. The stretch at 188 to 221 (IVDYRGMLRRLQEMKKEQEDKMAQYINTISSLRH) forms a coiled coil. One can recognise an Ig-like 2 domain in the interval 309 to 398 (PRVVVPLAET…SSAWLVVEAG (90 aa)). The segment covering 403–433 (LQSTSADHKLQSRRSGKDGRLDIYGERRDAT) has biased composition (basic and acidic residues). The disordered stretch occupies residues 403-454 (LQSTSADHKLQSRRSGKDGRLDIYGERRDATRSSTSRYKPGTGSFSKDAQGP). The span at 434–449 (RSSTSRYKPGTGSFSK) shows a compositional bias: polar residues. In terms of domain architecture, Ig-like 3 spans 454 to 539 (PMGHFSQGLA…GDQQSEATLT (86 aa)). 3 consecutive Fibronectin type-III domains span residues 646-741 (PPQG…VAPE), 746-845 (APSA…MRPP), and 847-942 (LVRN…AMPV). The 85-residue stretch at 946–1030 (PKFLVDSSTK…LRTLQGKEVA (85 aa)) folds into the Ig-like 4 domain. The Fibronectin type-III 4 domain occupies 1043-1137 (APGPIHLQEN…TSQPWCIPRQ (95 aa)). Residues 1151 to 1245 (PDLSQKPRFL…GQAVSTATLI (95 aa)) enclose the Ig-like 5 domain.

In terms of assembly, interacts with FLNC. Interacts with KY. As to expression, expressed in skeletal muscle.

It is found in the nucleus. The protein resides in the cytoplasm. Its subcellular location is the myofibril. It localises to the sarcomere. The protein localises to the z line. The sequence is that of Immunoglobulin-like and fibronectin type III domain-containing protein 1 (IGFN1) from Homo sapiens (Human).